We begin with the raw amino-acid sequence, 387 residues long: Cytochrome b (387 aa).

The next 4 helical transmembrane spans lie at 32–52 (FGSL…TLAM), 76–98 (WLVR…LHIG), 113–133 (VWAI…LGYV), and 179–199 (FFAL…MHLI). Residues H82 and H96 each contribute to the heme b site. Heme b contacts are provided by H183 and H197. H202 lines the a ubiquinone pocket. 4 helical membrane-spanning segments follow: residues 226–246 (YLFK…SFVF), 290–310 (LLGV…PITD), 322–342 (LSKF…KLGA), and 349–369 (FIEL…IIVP).

Belongs to the cytochrome b family. In terms of assembly, fungal cytochrome b-c1 complex contains 10 subunits; 3 respiratory subunits, 2 core proteins and 5 low-molecular weight proteins. Cytochrome b-c1 complex is a homodimer. The cofactor is heme b.

It is found in the mitochondrion inner membrane. Functionally, component of the ubiquinol-cytochrome c reductase complex (complex III or cytochrome b-c1 complex) that is part of the mitochondrial respiratory chain. The b-c1 complex mediates electron transfer from ubiquinol to cytochrome c. Contributes to the generation of a proton gradient across the mitochondrial membrane that is then used for ATP synthesis. This chain is Cytochrome b (COB), found in Podospora anserina (strain S / ATCC MYA-4624 / DSM 980 / FGSC 10383) (Pleurage anserina).